The chain runs to 152 residues: Antiholin-like protein LrgA (152 aa).

Helical transmembrane passes span 23 to 43 (YSIF…KIIE), 45 to 65 (FMPI…IALC), 77 to 97 (VGTA…ISVI), and 108 to 128 (ILII…TGFA).

Belongs to the CidA/LrgA family. LrgA subfamily.

The protein resides in the cell membrane. Inhibits the expression or activity of extracellular murein hydrolases by interacting, possibly with LrgB, with the holin-like proteins CidA and/or CidB. The LrgAB and CidAB proteins may affect the proton motive force of the membrane. May be involved in programmed cell death (PCD), possibly triggering PCD in response to antibiotics and environmental stresses. This Staphylococcus epidermidis (strain ATCC 35984 / DSM 28319 / BCRC 17069 / CCUG 31568 / BM 3577 / RP62A) protein is Antiholin-like protein LrgA.